The sequence spans 126 residues: Histone H2B type 3-B (126 aa).

Over residues 1–12 (MPDPSKSAPAPK) the composition is skewed to low complexity. Residues 1 to 35 (MPDPSKSAPAPKKGSKKAVTKAQKKDGKKRKRGRK) form a disordered region. At proline 2 the chain carries N-acetylproline. An N6-(2-hydroxyisobutyryl)lysine; alternate modification is found at lysine 6. Lysine 6 is subject to N6-(beta-hydroxybutyryl)lysine; alternate. Lysine 6 bears the N6-acetyllysine; alternate mark. Lysine 6 bears the N6-butyryllysine; alternate mark. Lysine 6 bears the N6-crotonyllysine; alternate mark. Lysine 6 carries the post-translational modification N6-lactoyllysine; alternate. A Glycyl lysine isopeptide (Lys-Gly) (interchain with G-Cter in SUMO2); alternate cross-link involves residue lysine 6. At serine 7 the chain carries ADP-ribosylserine. Lysine 12 is modified (N6-(beta-hydroxybutyryl)lysine; alternate). N6-acetyllysine; alternate occurs at positions 12 and 13. N6-crotonyllysine; alternate occurs at positions 12 and 13. An N6-lactoyllysine; alternate modification is found at lysine 12. Lysine 13 is modified (N6-(2-hydroxyisobutyryl)lysine; alternate). Residue serine 15 is modified to Phosphoserine; by STK4/MST1. Lysine 16, lysine 17, lysine 21, and lysine 24 each carry N6-acetyllysine; alternate. Residues lysine 16, lysine 17, lysine 21, and lysine 24 each carry the N6-crotonyllysine; alternate modification. Residues lysine 16, lysine 17, lysine 21, and lysine 24 each carry the N6-lactoyllysine; alternate modification. An N6-(beta-hydroxybutyryl)lysine; alternate mark is found at lysine 17 and lysine 21. At lysine 17 the chain carries N6-glutaryllysine; alternate. An N6-(2-hydroxyisobutyryl)lysine; alternate mark is found at lysine 21 and lysine 24. An N6-butyryllysine; alternate modification is found at lysine 21. Lysine 21 participates in a covalent cross-link: Glycyl lysine isopeptide (Lys-Gly) (interchain with G-Cter in SUMO2); alternate. Lysine 25 carries the post-translational modification N6-(2-hydroxyisobutyryl)lysine. Lysine 35 is modified (N6-(2-hydroxyisobutyryl)lysine; alternate). N6-(beta-hydroxybutyryl)lysine; alternate is present on lysine 35. Residue lysine 35 is modified to N6-crotonyllysine; alternate. Lysine 35 carries the post-translational modification N6-glutaryllysine; alternate. An N6-succinyllysine; alternate modification is found at lysine 35. A Glycyl lysine isopeptide (Lys-Gly) (interchain with G-Cter in ubiquitin); alternate cross-link involves residue lysine 35. Glutamate 36 bears the PolyADP-ribosyl glutamic acid mark. Serine 37 is subject to Phosphoserine; by AMPK. Lysine 44, lysine 47, and lysine 58 each carry N6-(2-hydroxyisobutyryl)lysine; alternate. Lysine 44 bears the N6-lactoyllysine; alternate mark. Residues lysine 44 and lysine 47 each carry the N6-glutaryllysine; alternate modification. Residue lysine 47 is modified to N6-methyllysine; alternate. Position 58 is an N6,N6-dimethyllysine; alternate (lysine 58). A Dimethylated arginine modification is found at arginine 80. Residue lysine 86 is modified to N6-(2-hydroxyisobutyryl)lysine; alternate. The residue at position 86 (lysine 86) is an N6-(beta-hydroxybutyryl)lysine; alternate. At lysine 86 the chain carries N6-acetyllysine; alternate. Residue lysine 86 is modified to N6-lactoyllysine; alternate. At lysine 86 the chain carries N6,N6,N6-trimethyllysine; alternate. An omega-N-methylarginine mark is found at arginine 87 and arginine 93. At lysine 109 the chain carries N6-(2-hydroxyisobutyryl)lysine; alternate. Position 109 is an N6-lactoyllysine; alternate (lysine 109). Residue lysine 109 is modified to N6-glutaryllysine; alternate. Residue lysine 109 is modified to N6-methyllysine; alternate. Serine 113 carries an O-linked (GlcNAc) serine glycan. At threonine 116 the chain carries Phosphothreonine. 2 positions are modified to N6-(2-hydroxyisobutyryl)lysine; alternate: lysine 117 and lysine 121. Residues lysine 117 and lysine 121 each carry the N6-(beta-hydroxybutyryl)lysine; alternate modification. An N6-lactoyllysine; alternate mark is found at lysine 117 and lysine 121. 2 positions are modified to N6-glutaryllysine; alternate: lysine 117 and lysine 121. Lysine 117 and lysine 121 each carry N6-succinyllysine; alternate. An N6-malonyllysine; alternate modification is found at lysine 117. At lysine 117 the chain carries N6-methylated lysine; alternate. A Glycyl lysine isopeptide (Lys-Gly) (interchain with G-Cter in ubiquitin); alternate cross-link involves residue lysine 121.

The protein belongs to the histone H2B family. The nucleosome is a histone octamer containing two molecules each of H2A, H2B, H3 and H4 assembled in one H3-H4 heterotetramer and two H2A-H2B heterodimers. The octamer wraps approximately 147 bp of DNA. In terms of processing, monoubiquitination at Lys-35 (H2BK34Ub) by the MSL1/MSL2 dimer is required for histone H3 'Lys-4' (H3K4me) and 'Lys-79' (H3K79me) methylation and transcription activation at specific gene loci, such as HOXA9 and MEIS1 loci. Similarly, monoubiquitination at Lys-121 (H2BK120Ub) by the RNF20/40 complex gives a specific tag for epigenetic transcriptional activation and is also prerequisite for histone H3 'Lys-4' and 'Lys-79' methylation. It also functions cooperatively with the FACT dimer to stimulate elongation by RNA polymerase II. H2BK120Ub also acts as a regulator of mRNA splicing: deubiquitination by USP49 is required for efficient cotranscriptional splicing of a large set of exons. Phosphorylation at Ser-37 (H2BS36ph) by AMPK in response to stress promotes transcription. Phosphorylated on Ser-15 (H2BS14ph) by STK4/MST1 during apoptosis; which facilitates apoptotic chromatin condensation. Also phosphorylated on Ser-15 in response to DNA double strand breaks (DSBs), and in correlation with somatic hypermutation and immunoglobulin class-switch recombination. Post-translationally, glcNAcylation at Ser-113 promotes monoubiquitination of Lys-121. It fluctuates in response to extracellular glucose, and associates with transcribed genes. In terms of processing, ADP-ribosylated by PARP1 or PARP2 on Ser-7 (H2BS6ADPr) in response to DNA damage. H2BS6ADPr promotes recruitment of CHD1L. Poly ADP-ribosylation on Glu-36 (H2BE35ADPr) by PARP1 regulates adipogenesis: it inhibits phosphorylation at Ser-37 (H2BS36ph), thereby blocking expression of pro-adipogenetic genes. Crotonylation (Kcr) is specifically present in male germ cells and marks testis-specific genes in post-meiotic cells, including X-linked genes that escape sex chromosome inactivation in haploid cells. Crotonylation marks active promoters and enhancers and confers resistance to transcriptional repressors. It is also associated with post-meiotically activated genes on autosomes. Post-translationally, lactylated in macrophages by EP300/P300 by using lactoyl-CoA directly derived from endogenous or exogenous lactate, leading to stimulates gene transcription.

Its subcellular location is the nucleus. The protein localises to the chromosome. Its function is as follows. Core component of nucleosome. Nucleosomes wrap and compact DNA into chromatin, limiting DNA accessibility to the cellular machineries which require DNA as a template. Histones thereby play a central role in transcription regulation, DNA repair, DNA replication and chromosomal stability. DNA accessibility is regulated via a complex set of post-translational modifications of histones, also called histone code, and nucleosome remodeling. This chain is Histone H2B type 3-B, found in Homo sapiens (Human).